We begin with the raw amino-acid sequence, 848 residues long: Neurofilament medium polypeptide (848 aa).

Positions 1–10 (MSYTLDSLGN) are enriched in polar residues. The segment at 1–51 (MSYTLDSLGNPSAYRRVTETRSSFSRVSGSPSSGFRSQSWSRGSPSTVSSS) is disordered. Ser-2 is subject to N-acetylserine. The tract at residues 2–102 (SYTLDSLGNP…KLSRSNEKEQ (101 aa)) is head. Residues 21 to 44 (RSSFSRVSGSPSSGFRSQSWSRGS) show a composition bias toward low complexity. Ser-30 is modified (phosphoserine). Arg-42 bears the Omega-N-methylarginine mark. An O-linked (GlcNAc) threonine glycan is attached at Thr-47. A Phosphoserine modification is found at Ser-97. The IF rod domain occupies 99–410 (EKEQLQGLND…KLLEGEETRF (312 aa)). The tract at residues 103-134 (LQGLNDRFAGYIEKVHYLEQQNKEIEAEIQAL) is coil 1A. Positions 135–147 (RQKQASHAQLGDA) are linker 1. Positions 148–246 (YDQEIRELRA…EEEVADLLAQ (99 aa)) are coil 1B. Ser-224 is subject to Phosphoserine. The segment at 247–263 (IQASHITVERKDYLKTD) is linker 12. Positions 264–285 (ISTALKEIRSQLECHSDQNMHQ) are coil 2A. Residues 286–289 (AEEW) are linker 2. The segment at 290-410 (FKCRYAKLTE…KLLEGEETRF (121 aa)) is coil 2B. Tyr-318 carries the phosphotyrosine modification. Ser-344, Ser-416, and Ser-428 each carry phosphoserine. The tail stretch occupies residues 411–848 (STFSGSITGP…AIVKEVTQGD (438 aa)). Thr-430 carries an O-linked (GlcNAc) threonine glycan. Residues Ser-466 and Ser-482 each carry the phosphoserine modification. Positions 482-785 (SAKEEKEEAE…GEDSSDDKVV (304 aa)) are disordered. Residues 488 to 498 (EEAEEKEEEPE) show a composition bias toward acidic residues. A compositionally biased stretch (basic and acidic residues) spans 499–509 (AEKSPVKSPEA). Residues Ser-502 and Ser-506 each carry the phosphoserine modification. A compositionally biased stretch (acidic residues) spans 510–533 (KEEEEEGEKEEEEEGQEEEEEEDE). Residues 534–553 (GVKSDQAEEGGSEKEGSSEK) show a composition bias toward basic and acidic residues. Ser-537, Ser-545, Ser-550, and Ser-551 each carry phosphoserine. Positions 554 to 576 (DEGEQEEEEGETEAEGEGEEAEA) are enriched in acidic residues. Thr-565 bears the Phosphothreonine mark. Residues 577–604 (KEEKKIEGKVEEVAVKEEIKVEKPEKAK) are compositionally biased toward basic and acidic residues. Phosphoserine is present on residues Ser-605 and Ser-610. 2 stretches are compositionally biased toward basic and acidic residues: residues 611 to 677 (PVEE…KAVE) and 689 to 711 (SLEK…KAEE). Thr-642 carries the post-translational modification Phosphothreonine. Residues Ser-645, Ser-669, Ser-689, Ser-715, Ser-723, Ser-753, and Ser-769 each carry the phosphoserine modification. Basic and acidic residues-rich tracts occupy residues 720 to 732 (SDRS…KEDI) and 748 to 760 (TQEK…EEKG). A compositionally biased stretch (basic and acidic residues) spans 771–785 (AEEKKGEDSSDDKVV).

This sequence belongs to the intermediate filament family. Forms heterodimers with NEFL; which can further hetero-oligomerize (in vitro). Forms heterodimers with INA (in vitro). There are a number of repeats of the tripeptide K-S-P, NFM is phosphorylated on a number of the serines in this motif. It is thought that phosphorylation of NFM results in the formation of interfilament cross bridges that are important in the maintenance of axonal caliber. In terms of processing, phosphorylation seems to play a major role in the functioning of the larger neurofilament polypeptides (NF-M and NF-H), the levels of phosphorylation being altered developmentally and coincidentally with a change in the neurofilament function. Post-translationally, phosphorylated in the head and rod regions by the PKC kinase PKN1, leading to the inhibition of polymerization. In terms of tissue distribution, expressed in the sciatic nerve (at protein level).

It localises to the cytoplasm. The protein resides in the cytoskeleton. The protein localises to the cell projection. It is found in the axon. Functionally, neurofilaments usually contain three intermediate filament proteins: NEFL, NEFM, and NEFH which are involved in the maintenance of neuronal caliber. May additionally cooperate with the neuronal intermediate filament proteins PRPH and INA to form neuronal filamentous networks. The polypeptide is Neurofilament medium polypeptide (Nefm) (Mus musculus (Mouse)).